Consider the following 508-residue polypeptide: Acetyl-coenzyme A carboxylase carboxyl transferase subunit beta, chloroplastic (508 aa).

Disordered stretches follow at residues 30 to 51 (PIEN…NIQG) and 173 to 234 (NSSN…SSTH). Basic and acidic residues predominate over residues 35–47 (SESKDPNRNDTDK). A compositionally biased stretch (low complexity) spans 173-219 (NSSNNNSSNENSSNENSSNENSSNENSSNDYISSSISSQSENSSQNE). Over residues 220–234 (DITTSDQTIPESSTH) the composition is skewed to polar residues. Positions 244 to 508 (LWVQCENCYG…LHTFFPLNQN (265 aa)) constitute a CoA carboxyltransferase N-terminal domain. Zn(2+)-binding residues include C248, C251, C267, and C270. The C4-type zinc-finger motif lies at 248 to 270 (CENCYGLNYKKFFKSKMHLCEQC).

It belongs to the AccD/PCCB family. As to quaternary structure, acetyl-CoA carboxylase is a heterohexamer composed of biotin carboxyl carrier protein, biotin carboxylase and 2 subunits each of ACCase subunit alpha and ACCase plastid-coded subunit beta (accD). It depends on Zn(2+) as a cofactor.

The protein localises to the plastid. The protein resides in the chloroplast stroma. The enzyme catalyses N(6)-carboxybiotinyl-L-lysyl-[protein] + acetyl-CoA = N(6)-biotinyl-L-lysyl-[protein] + malonyl-CoA. The protein operates within lipid metabolism; malonyl-CoA biosynthesis; malonyl-CoA from acetyl-CoA: step 1/1. In terms of biological role, component of the acetyl coenzyme A carboxylase (ACC) complex. Biotin carboxylase (BC) catalyzes the carboxylation of biotin on its carrier protein (BCCP) and then the CO(2) group is transferred by the transcarboxylase to acetyl-CoA to form malonyl-CoA. In Lactuca sativa (Garden lettuce), this protein is Acetyl-coenzyme A carboxylase carboxyl transferase subunit beta, chloroplastic.